Consider the following 100-residue polypeptide: SAGA-associated factor 11 (100 aa).

The segment at 73–94 adopts an SGF11-type zinc-finger fold; the sequence is FQCENCGRSIAGGRFAQHMTKC.

It belongs to the SGF11 family. In terms of assembly, component of the 1.8 MDa SAGA transcription coactivator-HAT complex. SAGA is built of 5 distinct domains with specialized functions. Within the SAGA complex, SUS1, SGF11, SGF73 and UBP8 form an additional subcomplex of SAGA called the DUB module (deubiquitination module). Interacts directly with SGF73, SUS1 and UBP8.

The protein resides in the nucleus. Functionally, functions as a component of the transcription regulatory histone acetylation (HAT) complex SAGA. At the promoters, SAGA is required for recruitment of the basal transcription machinery. It influences RNA polymerase II transcriptional activity through different activities such as TBP interaction and promoter selectivity, interaction with transcription activators, and chromatin modification through histone acetylation and deubiquitination. SAGA acetylates nucleosomal histone H3 to some extent (to form H3K9ac, H3K14ac, H3K18ac and H3K23ac). SAGA interacts with DNA via upstream activating sequences (UASs). Involved in transcriptional regulation of a subset of SAGA-regulated genes. Within the SAGA complex, participates in a subcomplex, that specifically deubiquitinates histones H2B. The polypeptide is SAGA-associated factor 11 (Debaryomyces hansenii (strain ATCC 36239 / CBS 767 / BCRC 21394 / JCM 1990 / NBRC 0083 / IGC 2968) (Yeast)).